The chain runs to 229 residues: MNSIELPLLDRTAQNSVISTTLNDFSNWSRLSSLWPLLYGTSCCFIEFASLIGSRFDFDRYGLVPRSSPRQADLILTAGTVTMKMAPSLVRLYEQMPEPKYVIAMGACTITGGMFSTDSYSTVRGVDKLIPVDVYLPGCPPKPEAVIDAITKLRKKISREIYEDRIRPQRQRSNRCFTTNHKFHISRSMNTGNYDQGFLYQPASTFTSEIPTETFFKYKSSVSSHELVN.

[4Fe-4S] cluster contacts are provided by cysteine 43, cysteine 44, cysteine 108, and cysteine 139.

The protein belongs to the complex I 20 kDa subunit family. In terms of assembly, NDH is composed of at least 16 different subunits, 5 of which are encoded in the nucleus. It depends on [4Fe-4S] cluster as a cofactor.

It localises to the plastid. It is found in the chloroplast thylakoid membrane. The catalysed reaction is a plastoquinone + NADH + (n+1) H(+)(in) = a plastoquinol + NAD(+) + n H(+)(out). It carries out the reaction a plastoquinone + NADPH + (n+1) H(+)(in) = a plastoquinol + NADP(+) + n H(+)(out). In terms of biological role, NDH shuttles electrons from NAD(P)H:plastoquinone, via FMN and iron-sulfur (Fe-S) centers, to quinones in the photosynthetic chain and possibly in a chloroplast respiratory chain. The immediate electron acceptor for the enzyme in this species is believed to be plastoquinone. Couples the redox reaction to proton translocation, and thus conserves the redox energy in a proton gradient. This Coffea arabica (Arabian coffee) protein is NAD(P)H-quinone oxidoreductase subunit K, chloroplastic.